We begin with the raw amino-acid sequence, 116 residues long: Large ribosomal subunit protein bL19 (116 aa).

The protein belongs to the bacterial ribosomal protein bL19 family.

This protein is located at the 30S-50S ribosomal subunit interface and may play a role in the structure and function of the aminoacyl-tRNA binding site. This Pseudomonas putida (strain W619) protein is Large ribosomal subunit protein bL19.